The following is a 308-amino-acid chain: GDP-L-colitose synthase (308 aa).

NADP(+) contacts are provided by residues 7–13 (GAGGMVG) and 101–104 (LGSS). The active-site Proton donor/acceptor is the Tyr-132. NADP(+) contacts are provided by residues Lys-136, 160–163 (PCNL), and His-176. Residues Lys-184, Trp-199, and Arg-206 each coordinate substrate.

This sequence belongs to the NAD(P)-dependent epimerase/dehydratase family. Fucose synthase subfamily. In terms of assembly, homodimer.

It catalyses the reaction GDP-beta-L-colitose + NAD(+) = GDP-4-dehydro-3,6-dideoxy-alpha-D-mannose + NADH + H(+). The catalysed reaction is GDP-beta-L-colitose + NADP(+) = GDP-4-dehydro-3,6-dideoxy-alpha-D-mannose + NADPH + H(+). Its pathway is nucleotide-sugar metabolism; GDP-L-colitose biosynthesis. Involved in the biosynthesis of the L-colitose (3,6-dideoxyl-L-xylo-hexose) present in the O-antigen region of lipopolysaccharides (LPS) where it serves as antigenic determinant and are vital for bacterial defense and survival. Catalyzes the two-step NADP-dependent conversion of GDP-4-keto-3,6-dideoxy-D-mannose to GDP-L-colitose. ColC is a bifunctional enzyme catalyzing the C-5 epimerization of GDP-4-keto-3,6-dideoxy-D-mannose and the subsequent C-4 keto reduction of the resulting L-epimer to give GDP-L-colitose. It can use both NADP(+) and NAD(+) as electron acceptor, with a slight preference for NADP(+). The chain is GDP-L-colitose synthase from Yersinia pseudotuberculosis.